We begin with the raw amino-acid sequence, 37 residues long: Kunitz-type proteinase inhibitor AEPI-IV (37 aa).

Residues 6 to 37 (CQLPAVVGRCRGRFPRYYYNTEAGKCQRFIYG) enclose the BPTI/Kunitz inhibitor domain.

This sequence belongs to the venom Kunitz-type family. Sea anemone type 2 potassium channel toxin subfamily.

Its subcellular location is the secreted. The protein localises to the nematocyst. In terms of biological role, dual-function toxin that inhibits both the serine protease trypsin and voltage-gated potassium channels (Kv). This chain is Kunitz-type proteinase inhibitor AEPI-IV, found in Actinia equina (Beadlet anemone).